The following is a 43-amino-acid chain: Delta-actitoxin-Bca1a (43 aa).

Disulfide bonds link Cys1–Cys41, Cys3–Cys31, and Cys24–Cys42.

The protein resides in the secreted. The protein localises to the nematocyst. Binds specifically to voltage-gated sodium channels (Nav), thereby delaying their inactivation during signal transduction. Thus it strongly stimulates mammalian cardiac muscle contraction. This Bunodosoma capense (Knobbly sea anemone) protein is Delta-actitoxin-Bca1a.